The chain runs to 160 residues: Cytochrome b6-f complex subunit 4 (160 aa).

The next 3 membrane-spanning stretches (helical) occupy residues 36 to 56 (LLYI…GLAV), 95 to 115 (LLGI…PFIE), and 128 to 148 (VAMT…IGAA).

The protein belongs to the cytochrome b family. PetD subfamily. The 4 large subunits of the cytochrome b6-f complex are cytochrome b6, subunit IV (17 kDa polypeptide, PetD), cytochrome f and the Rieske protein, while the 4 small subunits are PetG, PetL, PetM and PetN. The complex functions as a dimer.

It localises to the cellular thylakoid membrane. In terms of biological role, component of the cytochrome b6-f complex, which mediates electron transfer between photosystem II (PSII) and photosystem I (PSI), cyclic electron flow around PSI, and state transitions. The polypeptide is Cytochrome b6-f complex subunit 4 (Synechococcus sp. (strain CC9902)).